Reading from the N-terminus, the 230-residue chain is UPF0173 metal-dependent hydrolase Sca_1312 (230 aa).

It belongs to the UPF0173 family.

This Staphylococcus carnosus (strain TM300) protein is UPF0173 metal-dependent hydrolase Sca_1312.